Here is a 471-residue protein sequence, read N- to C-terminus: UDP-N-acetylmuramoylalanine--D-glutamate ligase (471 aa).

122–128 (GTNGKTT) is a binding site for ATP.

The protein belongs to the MurCDEF family.

It is found in the cytoplasm. The catalysed reaction is UDP-N-acetyl-alpha-D-muramoyl-L-alanine + D-glutamate + ATP = UDP-N-acetyl-alpha-D-muramoyl-L-alanyl-D-glutamate + ADP + phosphate + H(+). It participates in cell wall biogenesis; peptidoglycan biosynthesis. Its function is as follows. Cell wall formation. Catalyzes the addition of glutamate to the nucleotide precursor UDP-N-acetylmuramoyl-L-alanine (UMA). This Streptomyces coelicolor (strain ATCC BAA-471 / A3(2) / M145) protein is UDP-N-acetylmuramoylalanine--D-glutamate ligase.